The following is a 259-amino-acid chain: Phosphatidylglycerol--prolipoprotein diacylglyceryl transferase (259 aa).

Helical transmembrane passes span 9–29 (IIFSIGPLAISWYSLSYVIGI), 55–75 (FITYAVIGIIVGGRLGFVLLY), 92–112 (EGGMSFHGGALGGIITAYLFC), and 117–137 (INFLSLTDIIAPVVPIGLFLG). Arginine 138 provides a ligand contact to a 1,2-diacyl-sn-glycero-3-phospho-(1'-sn-glycerol). 3 consecutive transmembrane segments (helical) span residues 172-192 (QLYEAFFEGLVLFSILAYTTF), 201-221 (GLNSGIFFTFYGLFRITIEIF), and 228-248 (IGFILDSLTMGQILSVPMLLL).

Belongs to the Lgt family.

Its subcellular location is the cell inner membrane. It carries out the reaction L-cysteinyl-[prolipoprotein] + a 1,2-diacyl-sn-glycero-3-phospho-(1'-sn-glycerol) = an S-1,2-diacyl-sn-glyceryl-L-cysteinyl-[prolipoprotein] + sn-glycerol 1-phosphate + H(+). It participates in protein modification; lipoprotein biosynthesis (diacylglyceryl transfer). Catalyzes the transfer of the diacylglyceryl group from phosphatidylglycerol to the sulfhydryl group of the N-terminal cysteine of a prolipoprotein, the first step in the formation of mature lipoproteins. In Rickettsia africae (strain ESF-5), this protein is Phosphatidylglycerol--prolipoprotein diacylglyceryl transferase.